Here is a 174-residue protein sequence, read N- to C-terminus: Peptide methionine sulfoxide reductase MsrA (174 aa).

Residue Cys-11 is part of the active site.

The protein belongs to the MsrA Met sulfoxide reductase family.

It carries out the reaction L-methionyl-[protein] + [thioredoxin]-disulfide + H2O = L-methionyl-(S)-S-oxide-[protein] + [thioredoxin]-dithiol. It catalyses the reaction [thioredoxin]-disulfide + L-methionine + H2O = L-methionine (S)-S-oxide + [thioredoxin]-dithiol. Has an important function as a repair enzyme for proteins that have been inactivated by oxidation. Catalyzes the reversible oxidation-reduction of methionine sulfoxide in proteins to methionine. The chain is Peptide methionine sulfoxide reductase MsrA from Haloquadratum walsbyi (strain DSM 16790 / HBSQ001).